The sequence spans 548 residues: Probable zinc metalloprotease EGY1, chloroplastic (548 aa).

Residues 1–18 (MGTLTSVAFAAAVNIRFR) constitute a chloroplast transit peptide. A compositionally biased stretch (basic and acidic residues) spans 61–76 (NSNRDDSIGENGETHK). Residues 61-116 (NSNRDDSIGENGETHKSSVVKTATFEEEDEETSKSSSTTSSSNEFGSDKTSMPSTI) form a disordered region. Residues 103 to 116 (NEFGSDKTSMPSTI) are compositionally biased toward polar residues. 8 helical membrane passes run 242-262 (YVIALILFLLTIGSSVELGIA), 290-310 (LYPFVDAALPLAYGVLGILLF), 326-346 (LSIPYFIPNITLGSFGAITQF), 361-381 (LAGPFAGAALSVSMFAVGLFL), 388-408 (ANDLVQVPSMLFQGSLLLGLI), 416-436 (AALHAATVSIHPLVIAGWCGL), 474-494 (MLGLRVLGGPLALPWGLYVLI), and 516-536 (ALVGIALILVVLTLLPVWDEL).

This sequence belongs to the peptidase M50B family. In terms of tissue distribution, expressed in roots, leaves, cotyledons, hypocotyls, stems, flowers and siliques.

It is found in the plastid. The protein resides in the chloroplast membrane. In terms of biological role, membrane-associated and ATP-independent metalloprotease required for development of both thylakoid grana and well-organized lamellae in chloroplast. Required for the accumulation of chlorophyll and chlorophyll a/b binding (CAB) proteins (from both PS I and PS II) in chloroplast membranes, and for grana formation and normal chloroplast development. Involved in the regulation of nuclear gene expression in response to ammonium stress and interacts with ABA signaling. Carries out beta-casein degradation in an ATP-independent manner in vitro. The protein is Probable zinc metalloprotease EGY1, chloroplastic (EGY1) of Arabidopsis thaliana (Mouse-ear cress).